Here is a 191-residue protein sequence, read N- to C-terminus: uncharacterized protein (191 aa).

The signal sequence occupies residues M1–A23.

This is an uncharacterized protein from Bacillus subtilis (strain 168).